The primary structure comprises 925 residues: Coronin-7 (925 aa).

WD repeat units lie at residues 75-115 (CHSD…QALP), 124-163 (PEDL…PLTE), 166-205 (AHGD…RASQ), and 209-253 (AHEN…SALA). A disordered region spans residues 419–461 (VGDADASEGFSSPPSSLTSPSTPSSLGPSLSSTSGIGTSPSLR). The span at 429–460 (SSPPSSLTSPSTPSSLGPSLSSTSGIGTSPSL) shows a compositional bias: low complexity. Residues Ser-462 and Ser-465 each carry the phosphoserine modification. Lys-472 participates in a covalent cross-link: Glycyl lysine isopeptide (Lys-Gly) (interchain with G-Cter in ubiquitin). WD repeat units lie at residues 542–582 (QNGA…LEEV), 592–632 (GHTE…DRLK), and 635–674 (GHQD…EPLQ). Lys-680 participates in a covalent cross-link: Glycyl lysine isopeptide (Lys-Gly) (interchain with G-Cter in ubiquitin). One copy of the WD 8 repeat lies at 728–768 (DVAPSTLLPSYDPDTGLVLLTGKGDTRVFLYELLPESPFFL). Residues 858-925 (QPPDMSPVSQ…FEGVDEDEWD (68 aa)) are disordered. The span at 866-882 (SQAPREAPARRAPSSAQ) shows a compositional bias: low complexity. Residues 884–896 (LEEKSDQQKKEEL) show a composition bias toward basic and acidic residues. Ser-915 carries the phosphoserine modification.

It belongs to the WD repeat coronin family. Interacts with clathrin adapter AP1 complex. This interaction takes place at Golgi membranes and not AP1-positive endosomal membranes. Interacts (when ubiquitinated at Lys-472) with EPS15. The membrane-associated form is phosphorylated on tyrosine residues. In terms of processing, ubiquitinated via 'Lys-33'-linked ubiquitin chains by the BCR(KLHL20) E3 ubiquitin ligase complex: 'Lys-33'-linked ubiquitination promotes interaction with EPS15 and facilitates actin polymerization at the trans-Golgi network, thereby facilitating post-Golgi trafficking. Deubiquitinated by ZRANB1/TRABID. In terms of tissue distribution, widely expressed. Expressed in the spleen, peripheral leukocytes, testes, brain, thymus and small intestine.

The protein resides in the golgi apparatus membrane. It is found in the golgi apparatus. The protein localises to the trans-Golgi network. It localises to the cytoplasmic vesicle. Its subcellular location is the cytoplasm. The protein resides in the cytosol. Its function is as follows. F-actin regulator involved in anterograde Golgi to endosome transport: upon ubiquitination via 'Lys-33'-linked ubiquitin chains by the BCR(KLHL20) E3 ubiquitin ligase complex, interacts with EPS15 and localizes to the trans-Golgi network, where it promotes actin polymerization, thereby facilitating post-Golgi trafficking. May play a role in the maintenance of the Golgi apparatus morphology. In Homo sapiens (Human), this protein is Coronin-7 (CORO7).